The following is a 220-amino-acid chain: 7-cyano-7-deazaguanine synthase (220 aa).

Residue 10-20 coordinates ATP; the sequence is FSGGQDSTTCL. Residues Cys-186, Cys-195, Cys-198, and Cys-201 each coordinate Zn(2+).

Belongs to the QueC family. Homodimer. Zn(2+) serves as cofactor.

The catalysed reaction is 7-carboxy-7-deazaguanine + NH4(+) + ATP = 7-cyano-7-deazaguanine + ADP + phosphate + H2O + H(+). Its pathway is purine metabolism; 7-cyano-7-deazaguanine biosynthesis. Catalyzes the ATP-dependent conversion of 7-carboxy-7-deazaguanine (CDG) to 7-cyano-7-deazaguanine (preQ(0)). The protein is 7-cyano-7-deazaguanine synthase of Bacillus cereus (strain B4264).